We begin with the raw amino-acid sequence, 2013 residues long: Centrosomal protein 224 (2013 aa).

HEAT repeat units follow at residues 115 to 153 (TIEA…ALKT), 158 to 196 (QIPV…WIGK), 200 to 238 (PLIS…EAAK), 348 to 386 (TSYV…KSIS), and 427 to 465 (TKVT…IIGE). Residues 512-557 (PVSSSNKKPAAATGNSKSSSTTTPTGRSSNSSPLPPPPSSSDDIKN) form a disordered region. Residues 524 to 543 (TGNSKSSSTTTPTGRSSNSS) are compositionally biased toward low complexity. HEAT repeat units follow at residues 724-762 (IQQL…NIGA), 816-854 (VDIS…DANR), 857-895 (QPKL…AMGG), 899-937 (EKHA…SDLG), and 977-1015 (PSEI…QIPL). The interval 1043 to 1109 (KTGQPIPPPS…QQQQRRSILQ (67 aa)) is disordered. The span at 1053–1106 (KTKQSTSSSSSSSSTTSQQSSTPSSPQPIRQQQQQQQQQPTQPQQQQQQQQRRS) shows a compositional bias: low complexity. HEAT repeat units lie at residues 1240–1279 (EYEA…LCLP), 1281–1314 (VLFR…KNGA), and 1317–1353 (CGNL…HIKD). Composition is skewed to low complexity over residues 1372–1406 (NNNN…QQQQ), 1695–1735 (NRIS…INSS), and 1746–1796 (SNNT…TLST). Disordered stretches follow at residues 1372-1413 (NNNN…SLST), 1695-1809 (NRIS…YSGK), 1905-1949 (NQPS…IAPQ), and 1966-1995 (TLNP…DLNS). Positions 1799-1809 (INKEPRDYSGK) are enriched in basic and acidic residues. The span at 1913 to 1939 (NNNNNNNNNNNNNNNNNINNNNNNNNN) shows a compositional bias: low complexity. Polar residues predominate over residues 1940-1949 (SGGNENIAPQ). The segment covering 1967–1995 (LNPDQNSGSNNNNSHQNSPSTSSSNDLNS) has biased composition (low complexity).

Belongs to the TOG/XMAP215 family. In terms of assembly, interacts with eb1 at the microtubule tip, centrosome and kinetochore. Interacts with lis1 in the cortical attachment of microtubules.

The protein localises to the cytoplasm. It localises to the cytoskeleton. The protein resides in the microtubule organizing center. It is found in the centrosome. Its subcellular location is the chromosome. The protein localises to the centromere. It localises to the kinetochore. Its function is as follows. Involved in regulation of microtubule dynamics. Regulates the interaction of microtubules tips with the centrosome and cell cortex. The sequence is that of Centrosomal protein 224 (mtaA) from Dictyostelium discoideum (Social amoeba).